The sequence spans 586 residues: Alpha-1,2-mannosyltransferase MNN5 (586 aa).

The first 29 residues, 1 to 29 (MLIRLKKRKILQVIVSAVVLILFFCSVHN), serve as a signal peptide directing secretion. N113, N136, N259, and N264 each carry an N-linked (GlcNAc...) asparagine glycan.

It belongs to the MNN1/MNT family. Glycosylated.

The protein localises to the golgi apparatus. It is found in the cis-Golgi network. It participates in protein modification; protein glycosylation. In terms of biological role, responsible for addition of first and second mannose residues to the outer chain of core N-linked polysaccharides and to O-linked mannotriose. Implicated in late Golgi modifications. The chain is Alpha-1,2-mannosyltransferase MNN5 (MNN5) from Saccharomyces cerevisiae (strain YJM789) (Baker's yeast).